Here is a 200-residue protein sequence, read N- to C-terminus: MSKFLQQKPIILASSSTIRHKLMKSLGLDFLVLPSNCNEEEIKTRHKSDELVELGITLAKIKALDVSQHYPEHYIIAADQLCVAGKRVFNKPLNHQTAVSHLRELSGKQHQQIACLCIVKESKILWQYHETATLTLHHLSEKTIEAYLQAEKPYQSCGAYQYEGLGKWLFKEVQGSEDTILGLPLMPLVNALVNLKVVGI.

The Proton acceptor role is filled by Asp79.

This sequence belongs to the Maf family. Requires a divalent metal cation as cofactor.

Its subcellular location is the cytoplasm. It carries out the reaction a ribonucleoside 5'-triphosphate + H2O = a ribonucleoside 5'-phosphate + diphosphate + H(+). The catalysed reaction is a 2'-deoxyribonucleoside 5'-triphosphate + H2O = a 2'-deoxyribonucleoside 5'-phosphate + diphosphate + H(+). Functionally, nucleoside triphosphate pyrophosphatase. May have a dual role in cell division arrest and in preventing the incorporation of modified nucleotides into cellular nucleic acids. The protein is Nucleoside triphosphate pyrophosphatase of Legionella pneumophila (strain Corby).